The chain runs to 354 residues: Alkanal monooxygenase alpha chain (354 aa).

The protein belongs to the bacterial luciferase oxidoreductase family. Heterodimer of an alpha and a beta chain.

The enzyme catalyses a long-chain fatty aldehyde + FMNH2 + O2 = a long-chain fatty acid + hnu + FMN + H2O + 2 H(+). Functionally, light-emitting reaction in luminous bacteria. The chain is Alkanal monooxygenase alpha chain (luxA) from Photobacterium leiognathi.